The primary structure comprises 450 residues: Signal recognition particle 54 kDa protein (450 aa).

GTP-binding positions include 107–114, 188–192, and 247–250; these read GIQGSGKT, DTAGR, and TKLD.

This sequence belongs to the GTP-binding SRP family. SRP54 subfamily. In terms of assembly, part of the signal recognition particle protein translocation system, which is composed of SRP and FtsY. Archaeal SRP consists of a 7S RNA molecule of 300 nucleotides and two protein subunits: SRP54 and SRP19.

The protein localises to the cytoplasm. It carries out the reaction GTP + H2O = GDP + phosphate + H(+). Its function is as follows. Involved in targeting and insertion of nascent membrane proteins into the cytoplasmic membrane. Binds to the hydrophobic signal sequence of the ribosome-nascent chain (RNC) as it emerges from the ribosomes. The SRP-RNC complex is then targeted to the cytoplasmic membrane where it interacts with the SRP receptor FtsY. The chain is Signal recognition particle 54 kDa protein from Methanococcus maripaludis (strain C5 / ATCC BAA-1333).